Consider the following 450-residue polypeptide: WD repeat-containing protein ATCSA-1 (450 aa).

WD repeat units follow at residues 41 to 81, 101 to 141, 148 to 185, and 188 to 228; these read PHRG…DYEA, GHKY…AVVD, VYRTAMSSMAMSHTLIAAGTEDVQVRLCDIASGAFSHT, and GHRD…CFRV. The interval 269-298 is disordered; the sequence is LQSKQTGSQSVKGSSSAKASVEKSRQKRIH. The segment covering 271–287 has biased composition (low complexity); that stretch reads SKQTGSQSVKGSSSAKA. 2 WD repeats span residues 310–349 and 397–436; these read AHYGAVTGLKATNDGMYLLSAGSDSRIRLWDIESGRNTLV and GHYESVNTCCFNSNDQELYTSGSDRQILVWSPGGTVEDEM.

Interacts with DDB1A. As to expression, expressed in roots, leaves, stems, flowers and siliques.

It is found in the nucleus. Its function is as follows. Involved in UV-B tolerance and genome integrity. In association with DDB2, is necessary for repair of UV-B-induced DNA lesions. The polypeptide is WD repeat-containing protein ATCSA-1 (Arabidopsis thaliana (Mouse-ear cress)).